The following is an 822-amino-acid chain: Glycerol-3-phosphate acyltransferase (822 aa).

The HXXXXD motif signature appears at 304–309 (CHRSHM).

It belongs to the GPAT/DAPAT family.

The protein resides in the cell inner membrane. The enzyme catalyses sn-glycerol 3-phosphate + an acyl-CoA = a 1-acyl-sn-glycero-3-phosphate + CoA. Its pathway is phospholipid metabolism; CDP-diacylglycerol biosynthesis; CDP-diacylglycerol from sn-glycerol 3-phosphate: step 1/3. In Yersinia enterocolitica serotype O:8 / biotype 1B (strain NCTC 13174 / 8081), this protein is Glycerol-3-phosphate acyltransferase.